The following is a 156-amino-acid chain: Calmodulin (156 aa).

Ser2 is subject to N-acetylserine. EF-hand domains follow at residues 15–50, 51–86, 88–123, and 124–156; these read EQIA…LGQN, PTEA…KMKD, DSEE…LGEK, and LTDE…MTSK. Ca(2+) contacts are provided by Asp28, Asp30, Asp32, Thr34, Glu39, Asp64, Asp66, Asn68, Thr70, Glu75, Asp101, Asp103, Asn105, and Glu112. An N6,N6,N6-trimethyllysine modification is found at Lys123. Residues Asp137, Asp139, Asp141, Gln143, and Glu148 each coordinate Ca(2+).

The protein belongs to the calmodulin family.

Functionally, calmodulin mediates the control of a large number of enzymes, ion channels and other proteins by Ca(2+). Among the enzymes to be stimulated by the calmodulin-Ca(2+) complex are a number of protein kinases and phosphatases. This is Calmodulin from Strongylocentrotus intermedius (Sea urchin).